An 89-amino-acid polypeptide reads, in one-letter code: MTLSKEHKAAVITQFGGNDKNTGKTEVQVALFSRRITELTGHLQQHPKDKHSRRGLLMIVGKRKKALKYLQQVNIARYRQVLADLDLRK.

The protein belongs to the universal ribosomal protein uS15 family. In terms of assembly, part of the 30S ribosomal subunit. Forms a bridge to the 50S subunit in the 70S ribosome, contacting the 23S rRNA.

Its function is as follows. One of the primary rRNA binding proteins, it binds directly to 16S rRNA where it helps nucleate assembly of the platform of the 30S subunit by binding and bridging several RNA helices of the 16S rRNA. Functionally, forms an intersubunit bridge (bridge B4) with the 23S rRNA of the 50S subunit in the ribosome. The sequence is that of Small ribosomal subunit protein uS15 from Chlorobium luteolum (strain DSM 273 / BCRC 81028 / 2530) (Pelodictyon luteolum).